A 242-amino-acid polypeptide reads, in one-letter code: Response regulator GtcR (242 aa).

Positions 4–117 (TILIADDEPE…EAVARIQAQL (114 aa)) constitute a Response regulatory domain. Position 53 is a 4-aspartylphosphate (Asp53). A DNA-binding region (ompR/PhoB-type) is located at residues 133 to 233 (TQSTTVGRLT…VRGLGYKFAS (101 aa)).

Phosphorylated by GtcS.

Its function is as follows. Member of the two-component regulatory system GtcS/GtcR which may act in the control of the transcription of the grs operon which encodes the multienzymes involved in the biosynthesis of the peptide antibiotic gramicidin S. In Aneurinibacillus migulanus (Bacillus migulanus), this protein is Response regulator GtcR (gtcR).